The following is a 486-amino-acid chain: Probable FAD-binding monooxygenase ltbD (486 aa).

The disordered stretch occupies residues 186–243 (PAGDGGTNDQGPSRAQSTASSGGSGRPRSTESPQSGAQASTTPTSPPTTQSTGDDPAA). The span at 194–206 (DQGPSRAQSTASS) shows a compositional bias: polar residues. Positions 220-241 (SGAQASTTPTSPPTTQSTGDDP) are enriched in low complexity.

It belongs to the FAD-binding monooxygenase family. Homodimer. It depends on FAD as a cofactor.

Its function is as follows. Probable FAD-binding monooxygenase; part of the gene cluster that mediates the biosynthesis of luteodienoside A, a glycosylated polyketide consisting of an unusual 1-O-beta-D-glucopyranosyl-myo-inositol (glucinol) ester of 3-hydroxy-2,2,4-trimethylocta-4,6-dienoic acid. The HR-PKS ltbA produces the trimethylated polyketide chain from acetyl-CoA, malonyl-CoA and S-adenosylmethionine (SAM), and the ltbA cAT domain then uses glucinol produced by the glycosyltransferase ltbB as an offloading substrate to release luteodienoside A. Since ltbA and ltbB are sufficient for the biosynthesis of luteodienoside A, the functions of the methyltransferase ltbC and the FAD-binding monooxygenase ltbD within the pathway remain obscur. The polypeptide is Probable FAD-binding monooxygenase ltbD (Aspergillus luteorubrus).